The following is a 513-amino-acid chain: Probable DNA primase large subunit (513 aa).

[4Fe-4S] cluster is bound by residues Cys-315, Cys-398, Cys-415, and Cys-457.

It belongs to the eukaryotic-type primase large subunit family. As to quaternary structure, heterodimer of a small subunit and a large subunit. Requires [4Fe-4S] cluster as cofactor.

Functionally, DNA primase is the polymerase that synthesizes small RNA primers for the Okazaki fragments made during discontinuous DNA replication. The polypeptide is Probable DNA primase large subunit (Neurospora crassa (strain ATCC 24698 / 74-OR23-1A / CBS 708.71 / DSM 1257 / FGSC 987)).